The chain runs to 170 residues: Lipoprotein signal peptidase (170 aa).

The next 3 membrane-spanning stretches (helical) occupy residues 12-32 (WYWI…WVLS), 67-87 (WQRW…SVWL), and 94-113 (MWRL…GNLI). Residues Asp-123 and Asp-141 contribute to the active site. Residues 133–153 (HFPAFNIADSAICIGAGLIIL) form a helical membrane-spanning segment.

This sequence belongs to the peptidase A8 family.

The protein resides in the cell inner membrane. It carries out the reaction Release of signal peptides from bacterial membrane prolipoproteins. Hydrolyzes -Xaa-Yaa-Zaa-|-(S,diacylglyceryl)Cys-, in which Xaa is hydrophobic (preferably Leu), and Yaa (Ala or Ser) and Zaa (Gly or Ala) have small, neutral side chains.. The protein operates within protein modification; lipoprotein biosynthesis (signal peptide cleavage). In terms of biological role, this protein specifically catalyzes the removal of signal peptides from prolipoproteins. This chain is Lipoprotein signal peptidase, found in Shewanella piezotolerans (strain WP3 / JCM 13877).